Reading from the N-terminus, the 314-residue chain is uncharacterized protein (314 aa).

Positions 1–24 (MKRRRRWRGWLLFPALCFCLLCEA) are cleaved as a signal peptide. Residues asparagine 28, asparagine 43, asparagine 57, asparagine 77, asparagine 101, asparagine 102, asparagine 109, asparagine 151, asparagine 170, asparagine 217, asparagine 223, asparagine 252, asparagine 255, and asparagine 268 are each glycosylated (N-linked (GlcNAc...) asparagine; by host). Low complexity predominate over residues 47-114 (ATTGTTTTSP…TIGTNATSPS (68 aa)). Positions 47 to 116 (ATTGTTTTSP…GTNATSPSPS (70 aa)) are disordered.

This sequence belongs to the HHV-5 UL116 protein family. In terms of assembly, interacts with gH. Interacts with UL148. Post-translationally, highly glycosylated.

Its subcellular location is the virion. The protein resides in the host endoplasmic reticulum. Its function is as follows. Chaperone protein that cooperates with UL148 to regulate the abundance of gH complexes in virion. First interactor of gH in the host endoplasmic reticulum, regulates the early folding steps of virion assembly. Then, UL148 is recruited and favors the binding of gL. This is an uncharacterized protein from Homo sapiens (Human).